We begin with the raw amino-acid sequence, 174 residues long: Histone deacetylase complex subunit SAP30 homolog (174 aa).

The segment at 22–70 (CCLLDDGERCRKQAGNASYSKRIQKTVTQRRLKLSIDSHARHIYICDFH) adopts an Atypical zinc-finger fold.

The protein belongs to the SAP30 family. As to quaternary structure, component of the class 1 Sin3-histone deacetylase complex (HDAC).

It localises to the nucleus. Functionally, required for the function of the class 1 Sin3-histone deacetylase complex (HDAC). The sequence is that of Histone deacetylase complex subunit SAP30 homolog from Anopheles gambiae (African malaria mosquito).